The primary structure comprises 1649 residues: eIF-2-alpha kinase GCN2 (1649 aa).

A disordered region spans residues 1–26 (MAGGRGAAGRGPAEPQESYSQRQDHE). Positions 25–137 (HELQALEAIY…HHVQSFLSEH (113 aa)) constitute an RWD domain. Residues 146-205 (HEEMLERQAQEKQQRLLEARQKEEQEQREILHEIQKRKEEIKEEKKRKEMAKQERLEITS) adopt a coiled-coil conformation. The tract at residues 227 to 260 (HGGSPDFVGNGKARAHSSGRSRRERQYSVCSGEA) is disordered. At serine 230 the chain carries Phosphoserine. The span at 239-249 (ARAHSSGRSRR) shows a compositional bias: basic residues. Protein kinase domains follow at residues 296-539 (VYNA…HSFI) and 590-1001 (FEEL…SELL). ATP is bound by residues 596–604 (LGKGAFGAV) and lysine 619. A disordered region spans residues 662–785 (PAVPGTPPPD…CNEKDSRHEI (124 aa)). Threonine 667 carries the post-translational modification Phosphothreonine. Residues 705 to 721 (LSSSVEWSTSAERSNSA) show a composition bias toward polar residues. Composition is skewed to acidic residues over residues 731 to 740 (SSDEEDEDER) and 754 to 764 (SDSDIIFDNED). Residue aspartate 847 is the Proton acceptor of the active site. At threonine 870 the chain carries Phosphothreonine. A phosphothreonine; by autocatalysis mark is found at threonine 899 and threonine 904. Residues 1022 to 1493 (TDGKAYRTMM…DHVMQKLRTK (472 aa)) are histidyl-tRNA synthetase-like. Lysine 1259 bears the N6-acetyllysine mark.

It belongs to the protein kinase superfamily. Ser/Thr protein kinase family. GCN2 subfamily. Homodimer; homodimerization is important for kinase activation by uncharged tRNAs. Interacts with GCN1; this interaction stimulates EIF2AK4/GCN2 kinase activity and is impaired by IMPACT upon a variety of stress conditions, such as amino acid depletion, UV-C irradiation, proteasome inhibitor treatment and glucose deprivation. Interacts with DNAJC3; this interaction inhibits EIF2AK4/GCN2 kinase activity during endoplasmic reticulum (ER), hypothermic and amino acid-starving stress conditions. Interacts with MAP3K20; activates EIF2AK4/GCN2 kinase activity in response to moderate ribotoxic stress. In terms of processing, autophosphorylated; autophosphorylation on Thr-899 is increased upon amino acid starvation and in UV irradiation cells and inhibited in presence of IMPACT.

It is found in the cytoplasm. It carries out the reaction L-seryl-[protein] + ATP = O-phospho-L-seryl-[protein] + ADP + H(+). The enzyme catalyses L-threonyl-[protein] + ATP = O-phospho-L-threonyl-[protein] + ADP + H(+). In terms of biological role, metabolic-stress sensing protein kinase that phosphorylates the alpha subunit of eukaryotic translation initiation factor 2 (EIF2S1/eIF-2-alpha) in response to low amino acid availability. Plays a role as an activator of the integrated stress response (ISR) required for adaptation to amino acid starvation. EIF2S1/eIF-2-alpha phosphorylation in response to stress converts EIF2S1/eIF-2-alpha into a global protein synthesis inhibitor, leading to a global attenuation of cap-dependent translation, and thus to a reduced overall utilization of amino acids, while concomitantly initiating the preferential translation of ISR-specific mRNAs, such as the transcriptional activator ATF4, and hence allowing ATF4-mediated reprogramming of amino acid biosynthetic gene expression to alleviate nutrient depletion. Required for the translational induction of protein kinase PRKCH following amino acid starvation. Binds uncharged tRNAs. Involved in cell cycle arrest by promoting cyclin D1 mRNA translation repression after the unfolded protein response pathway (UPR) activation or cell cycle inhibitor CDKN1A/p21 mRNA translation activation in response to amino acid deprivation. Plays a role in the consolidation of synaptic plasticity, learning as well as formation of long-term memory. Plays a role in neurite outgrowth inhibition. Plays a role in feeding behavior to maintain amino acid homeostasis; contributes to the innate aversion toward diets of imbalanced amino acid composition. Plays a proapoptotic role in response to glucose deprivation. Promotes global cellular protein synthesis repression in response to UV irradiation independently of the stress-activated protein kinase/c-Jun N-terminal kinase (SAPK/JNK) and p38 MAPK signaling pathways. Plays a role in the antiviral response against alphavirus infection; impairs early viral mRNA translation of the incoming genomic virus RNA, thus preventing alphavirus replication. The chain is eIF-2-alpha kinase GCN2 from Rattus norvegicus (Rat).